A 75-amino-acid polypeptide reads, in one-letter code: Protein BsdD (75 aa).

Its function is as follows. Involved in the non-oxidative decarboxylation and detoxification of phenolic derivatives under both aerobic and anaerobic conditions, however the precise biochemical function of BsdD in metabolism of phenolic acid is unknown. In Bacillus subtilis (strain 168), this protein is Protein BsdD.